The primary structure comprises 765 residues: uncharacterized protein (765 aa).

A signal peptide spans 1 to 22; sequence MKLKGFLAVGVSVFGFSGLLMA. Cys-23 is lipidated: N-palmitoyl cysteine. Cys-23 is lipidated: S-diacylglycerol cysteine. Disordered stretches follow at residues 177–203 and 218–255; these read EGTP…LEIA and TAQN…TTKS. The segment covering 179 to 192 has biased composition (polar residues); it reads TPTSTTVQATVSSR. Over residues 236–247 the composition is skewed to low complexity; the sequence is SSSSSSTTSTTG.

It belongs to the MG185/MG260 family.

The protein localises to the cell membrane. This is an uncharacterized protein from Mycoplasma genitalium (strain ATCC 33530 / DSM 19775 / NCTC 10195 / G37) (Mycoplasmoides genitalium).